A 388-amino-acid polypeptide reads, in one-letter code: Na(+)/H(+) antiporter NhaA (388 aa).

The next 12 membrane-spanning stretches (helical) occupy residues 14 to 34 (TIGILLIIATLLALFLENSPL), 59 to 79 (LLLWVNDGLMAVFFFYVGLEI), 95 to 115 (TFPAIAALGGMVVPALLFASL), 125 to 145 (GWAIPTATDIAFALGVLSLLG), 154 to 174 (VFLMTLAIVDDLGAIIVIALF), 177 to 197 (TKLSLTSLVVASIALTILFIM), 200 to 220 (MCVISKGAYILVGVALWVSVL), 222 to 242 (SGVHATLAGVALALLIPYRIN), 257 to 277 (GLHLWVNFFILPLFAFANAGV), 295 to 315 (IMLGLFIGKQLGVFGFGYLAV), 328 to 348 (LIQFYGVAVLAGIGFTMSLFI), and 362 to 382 (ADKLAVLIGSLLSGIWGYIVL).

This sequence belongs to the NhaA Na(+)/H(+) (TC 2.A.33) antiporter family.

The protein localises to the cell inner membrane. It carries out the reaction Na(+)(in) + 2 H(+)(out) = Na(+)(out) + 2 H(+)(in). Na(+)/H(+) antiporter that extrudes sodium in exchange for external protons. This Nitratiruptor sp. (strain SB155-2) protein is Na(+)/H(+) antiporter NhaA.